A 297-amino-acid polypeptide reads, in one-letter code: D-aminoacyl-tRNA deacylase (297 aa).

The protein belongs to the DtdA deacylase family. In terms of assembly, monomer. It depends on Zn(2+) as a cofactor.

The catalysed reaction is a D-aminoacyl-tRNA + H2O = a tRNA + a D-alpha-amino acid + H(+). The enzyme catalyses glycyl-tRNA(Ala) + H2O = tRNA(Ala) + glycine + H(+). In terms of biological role, D-aminoacyl-tRNA deacylase with broad substrate specificity. By recycling D-aminoacyl-tRNA to D-amino acids and free tRNA molecules, this enzyme counteracts the toxicity associated with the formation of D-aminoacyl-tRNA entities in vivo. The sequence is that of D-aminoacyl-tRNA deacylase from Methanosarcina acetivorans (strain ATCC 35395 / DSM 2834 / JCM 12185 / C2A).